Reading from the N-terminus, the 232-residue chain is Large ribosomal subunit protein uL3 (232 aa).

It belongs to the universal ribosomal protein uL3 family. As to quaternary structure, part of the 50S ribosomal subunit. Forms a cluster with proteins L14 and L19.

In terms of biological role, one of the primary rRNA binding proteins, it binds directly near the 3'-end of the 23S rRNA, where it nucleates assembly of the 50S subunit. This is Large ribosomal subunit protein uL3 from Sorangium cellulosum (strain So ce56) (Polyangium cellulosum (strain So ce56)).